The chain runs to 401 residues: Phosphoglycerate kinase (401 aa).

Residues 20–22 (DFN), Arg35, 58–61 (HLGR), Arg117, and Arg154 each bind substrate. Residues Lys204, Gly298, Glu329, and 358–361 (GGDS) each bind ATP.

This sequence belongs to the phosphoglycerate kinase family. Monomer.

It localises to the cytoplasm. The catalysed reaction is (2R)-3-phosphoglycerate + ATP = (2R)-3-phospho-glyceroyl phosphate + ADP. It participates in carbohydrate degradation; glycolysis; pyruvate from D-glyceraldehyde 3-phosphate: step 2/5. The protein is Phosphoglycerate kinase of Bifidobacterium longum (strain DJO10A).